A 127-amino-acid chain; its full sequence is Longitudinals lacking protein-like (127 aa).

The BTB domain maps to 33 to 98 (TDVTLACEGQ…MYAGEVNVSQ (66 aa)).

The BTB domain interacts with the BTB domain of Trl in vitro. Found in a Pc-containing complex.

It localises to the nucleus. Its function is as follows. Required, together with Trl, for maintaining the repressed state of target genes including homeotic genes Scr and Ubx. May also be involved in the activation of homeotic genes. Binds to a DNA Polycomb response element (PRE) at the bithorax complex. Also binds to polytene chromosomes at several hundred sites, many of which are shared with Trl and ph-p. Required during embryonic development. This chain is Longitudinals lacking protein-like, found in Drosophila melanogaster (Fruit fly).